Reading from the N-terminus, the 295-residue chain is sn-glycerol-3-phosphate transport system permease protein UgpA (295 aa).

Residues 1-11 (MSSSRPVFRSR) are Cytoplasmic-facing. A helical membrane pass occupies residues 12–32 (WLPYLLVAPQLIITVIFFIWP). At 33–80 (AGEALWYSLQSVDPFGFSSQFVGLDNFVTLFHDSYYLDAFWTTIKFST) the chain is on the periplasmic side. The region spanning 76–284 (IKFSTFVTVS…FLVIVLTVVQ (209 aa)) is the ABC transmembrane type-1 domain. A helical membrane pass occupies residues 81 to 101 (FVTVSGLLVSLFFAALVEYIV). Residues 102 to 109 (RGSRFYQT) are Cytoplasmic-facing. The helical transmembrane segment at 110–130 (LMLLPYAVAPAVAAVLWIFLF) threads the bilayer. Residues 131–156 (NPGRGLITHFLAEFGYDWNHAQNSGQ) lie on the Periplasmic side of the membrane. A helical membrane pass occupies residues 157–177 (AMFLVVFASVWKQISYNFLFF). The Cytoplasmic portion of the chain corresponds to 178–207 (YAALQSIPRSLIEAAAIDGAGPIRRFFKIA). The chain crosses the membrane as a helical span at residues 208–228 (LPLIAPVSFFLLVVNLVYAFF). At 229–262 (DTFPVIDAATSGGPVQATTTLIYKIYREGFTGLD) the chain is on the periplasmic side. Residues 263–283 (LASSAAQSVVLMFLVIVLTVV) traverse the membrane as a helical segment. Residues 284 to 295 (QFRYVEGKVRYQ) are Cytoplasmic-facing.

Belongs to the binding-protein-dependent transport system permease family. UgpAE subfamily. In terms of assembly, the complex is composed of two ATP-binding proteins (UgpC), two transmembrane proteins (UgpA and UgpE) and a solute-binding protein (UgpB).

It localises to the cell inner membrane. In terms of biological role, part of the ABC transporter complex UgpBAEC involved in sn-glycerol-3-phosphate (G3P) import. Probably responsible for the translocation of the substrate across the membrane. The polypeptide is sn-glycerol-3-phosphate transport system permease protein UgpA (ugpA) (Escherichia coli O6:K15:H31 (strain 536 / UPEC)).